The sequence spans 594 residues: MASSTPSSSATSSNAGADPNTTNLRPTTYDTWCGVAHGCTRKLGLKICGFLQRTNSLEEKSRLVSAFKERQSSKNLLSCENSDRDGRFRRTETDFSNLFARDLLPAKNGEEQTVQFLLEVVDILLNYVRKTFDRSTKVLDFHHPHQLLEGMEGFNLELSDHPESLEQILVDCRDTLKYGVRTGHPRFFNQLSTGLDIIGLAGEWLTSTANTNMFTYEIAPVFVLMEQITLKKMREIVGWSSKDGDGIFSPGGAISNMYSIMAARYKFFPEVKTKGMAAVPKLVLFTSEHSHYSIKKAGAALGFGTDNVILIKCNERGKIIPADLEAKILEAKQKGYVPLYVNATAGTTVYGAFDPIQEIADICEKYNLWLHVDAAWGGGLLMSRKHRHKLSGIERANSVTWNPHKMMGVLLQCSAILVKEKGILQGCNQMCAGYLFQPDKQYDVSYDTGDKAIQCGRHVDIFKFWLMWKAKGTVGFENQINKCLELAEYLYAKIKNREEFEMVFDGEPEHTNVCFWYIPQSLRGIPDSPERREKLHRVAPKIKALMMESGTTMVGYQPQGDKANFFRMVISNPAATQSDIDFLIEEIERLGQDL.

A compositionally biased stretch (low complexity) spans 1–13; that stretch reads MASSTPSSSATSS. Positions 1–23 are disordered; it reads MASSTPSSSATSSNAGADPNTTN. Phosphoserine is present on Ser78. Residue 190-192 coordinates 4-aminobutanoate; the sequence is QLS. An N6-(pyridoxal phosphate)lysine modification is found at Lys405. Residue Arg567 coordinates 4-aminobutanoate.

It belongs to the group II decarboxylase family. In terms of assembly, homodimer. It depends on pyridoxal 5'-phosphate as a cofactor.

It carries out the reaction L-glutamate + H(+) = 4-aminobutanoate + CO2. In terms of biological role, catalyzes the synthesis of the inhibitory neurotransmitter gamma-aminobutyric acid (GABA) with pyridoxal 5'-phosphate as cofactor. The sequence is that of Glutamate decarboxylase 1 (GAD1) from Felis catus (Cat).